Consider the following 477-residue polypeptide: Tail sheath protein (477 aa).

This sequence belongs to the myoviridae tail sheath protein family. As to quaternary structure, homomultimer.

Its subcellular location is the virion. The protein resides in the host cytoplasm. Functionally, polymerizes as an extended structure around the baseplate-tail tube complex. During ejection, the sheath shifts to a contracted form, thereby making the inner tail tube protrude through the host cell envelope. The polypeptide is Tail sheath protein (Burkholderia phage BcepMu (isolate -/United States/Summer/2002) (Bacteriophage BcepMu)).